The sequence spans 174 residues: Large ribosomal subunit protein bL17 (174 aa).

This sequence belongs to the bacterial ribosomal protein bL17 family. In terms of assembly, part of the 50S ribosomal subunit. Contacts protein L32.

The sequence is that of Large ribosomal subunit protein bL17 from Acetivibrio thermocellus (strain ATCC 27405 / DSM 1237 / JCM 9322 / NBRC 103400 / NCIMB 10682 / NRRL B-4536 / VPI 7372) (Clostridium thermocellum).